A 131-amino-acid polypeptide reads, in one-letter code: MKKTKVINSDISRVIAQMGHFDKLSIGDAGMPVPRTTEKIDLAVTNGVPSFMEVLNNVLEELAVQRIYLAEEIKTENPDMLAAIETRLPETPISFIPHTEMKQELNNCHAFIRTGEMTPYANILLESNVVF.

The active-site Proton donor is the His-20. Residues Asp-28, His-98, and 120–122 (YAN) contribute to the substrate site.

It belongs to the RbsD / FucU family. RbsD subfamily. As to quaternary structure, homodecamer.

It localises to the cytoplasm. It carries out the reaction beta-D-ribopyranose = beta-D-ribofuranose. The protein operates within carbohydrate metabolism; D-ribose degradation; D-ribose 5-phosphate from beta-D-ribopyranose: step 1/2. Functionally, catalyzes the interconversion of beta-pyran and beta-furan forms of D-ribose. This Enterococcus faecalis (strain ATCC 700802 / V583) protein is D-ribose pyranase.